A 475-amino-acid polypeptide reads, in one-letter code: ADP-ribose glycohydrolase MACROD2 (475 aa).

A Macro domain is found at 59 to 240 (QEAPQMKKSL…IYKKKMNEFF (182 aa)). Substrate is bound by residues 77–79 (GDI), 90–92 (AAN), and 97–102 (GGGGVD). K170 participates in a covalent cross-link: Glycyl lysine isopeptide (Lys-Gly) (interchain with G-Cter in ubiquitin). Residues 185–191 (ISTGIYG) and F224 each bind substrate. 2 disordered regions span residues 241–306 (PVDD…SQEA) and 324–475 (GVNT…EDLQ). 2 stretches are compositionally biased toward basic and acidic residues: residues 251–261 (ADMKEDSEGPE) and 335–359 (SEDK…DSDM). Residues 360-375 (TNHSVCDQELPNGQEN) are compositionally biased toward polar residues. A compositionally biased stretch (basic and acidic residues) spans 376–386 (DSAKSEGKTEA). 2 stretches are compositionally biased toward polar residues: residues 387–402 (ESPS…SPNQ) and 440–469 (SQGS…PTES).

This sequence belongs to the MacroD-type family. MacroD1/2-like subfamily. Interacts with ADP-ribosylated PARP1. In terms of tissue distribution, expressed in the kidney.

It localises to the nucleus. The catalysed reaction is 2''-O-acetyl-ADP-D-ribose + H2O = ADP-D-ribose + acetate + H(+). The enzyme catalyses 4-O-(ADP-D-ribosyl)-L-aspartyl-[protein] + H2O = L-aspartyl-[protein] + ADP-D-ribose + H(+). It carries out the reaction 5-O-(ADP-D-ribosyl)-L-glutamyl-[protein] + H2O = L-glutamyl-[protein] + ADP-D-ribose + H(+). It catalyses the reaction alpha-NAD(+) + H2O = ADP-D-ribose + nicotinamide + H(+). With respect to regulation, subject to product inhibition by ADP-ribose. In terms of biological role, removes ADP-ribose from aspartate and glutamate residues in proteins bearing a single ADP-ribose moiety. Inactive towards proteins bearing poly-ADP-ribose. Deacetylates O-acetyl-ADP ribose, a signaling molecule generated by the deacetylation of acetylated lysine residues in histones and other proteins. The protein is ADP-ribose glycohydrolase MACROD2 of Mus musculus (Mouse).